The chain runs to 101 residues: NADH-quinone oxidoreductase subunit K (101 aa).

3 helical membrane passes run 4-24, 30-50, and 61-81; these read LAHYLVLGAVLFAISIVGIFL, IVLLMAIELMLLAVNMNFVAF, and VFVFFILTVAAAESAIGLAIL.

The protein belongs to the complex I subunit 4L family. In terms of assembly, NDH-1 is composed of 14 different subunits. Subunits NuoA, H, J, K, L, M, N constitute the membrane sector of the complex.

The protein resides in the cell inner membrane. The catalysed reaction is a quinone + NADH + 5 H(+)(in) = a quinol + NAD(+) + 4 H(+)(out). In terms of biological role, NDH-1 shuttles electrons from NADH, via FMN and iron-sulfur (Fe-S) centers, to quinones in the respiratory chain. The immediate electron acceptor for the enzyme in this species is believed to be ubiquinone. Couples the redox reaction to proton translocation (for every two electrons transferred, four hydrogen ions are translocated across the cytoplasmic membrane), and thus conserves the redox energy in a proton gradient. The chain is NADH-quinone oxidoreductase subunit K from Ralstonia nicotianae (strain ATCC BAA-1114 / GMI1000) (Ralstonia solanacearum).